Reading from the N-terminus, the 116-residue chain is Putative pterin-4-alpha-carbinolamine dehydratase (116 aa).

It belongs to the pterin-4-alpha-carbinolamine dehydratase family.

It catalyses the reaction (4aS,6R)-4a-hydroxy-L-erythro-5,6,7,8-tetrahydrobiopterin = (6R)-L-erythro-6,7-dihydrobiopterin + H2O. This is Putative pterin-4-alpha-carbinolamine dehydratase from Xylella fastidiosa (strain M23).